The following is a 96-amino-acid chain: MPGPTPSGTNVGSSGRSPSKAVAARAAGSTVRQRKNASCGTRSAGRTTSAGTGGMWRFYTEDSPGLKVGPVPVLVMSLLFIASVFMLHIWGKYTRS.

A compositionally biased stretch (polar residues) spans 1 to 17; the sequence is MPGPTPSGTNVGSSGRS. Residues 1–54 are disordered; that stretch reads MPGPTPSGTNVGSSGRSPSKAVAARAAGSTVRQRKNASCGTRSAGRTTSAGTGG. Proline 2 is modified (N-acetylproline). Residues 2 to 71 lie on the Cytoplasmic side of the membrane; it reads PGPTPSGTNV…DSPGLKVGPV (70 aa). Position 7 is a phosphoserine (serine 7). Threonine 9 is subject to Phosphothreonine. Residues serine 13, serine 14, and serine 17 each carry the phosphoserine modification. Cysteine 39 carries the S-palmitoyl cysteine lipid modification. Low complexity predominate over residues 40 to 50; sequence GTRSAGRTTSA. Residues 72-91 traverse the membrane as a helical segment; sequence PVLVMSLLFIASVFMLHIWG. At 92-96 the chain is on the lumenal side; it reads KYTRS.

Belongs to the SEC61-beta family. In terms of assembly, the SEC61 channel-forming translocon complex consists of channel-forming core components SEC61A1, SEC61B and SEC61G and different auxiliary components such as SEC62 and SEC63. The SEC61 channel associates with the multi-pass translocon (MPT) complex. Interacts with TRAM1.

The protein localises to the endoplasmic reticulum membrane. In terms of biological role, component of SEC61 channel-forming translocon complex that mediates transport of signal peptide-containing precursor polypeptides across the endoplasmic reticulum (ER). Forms a ribosome receptor and a gated pore in the ER membrane, both functions required for cotranslational translocation of nascent polypeptides. The SEC61 channel is also involved in ER membrane insertion of transmembrane proteins: it mediates membrane insertion of the first few transmembrane segments of proteins, while insertion of subsequent transmembrane regions of multi-pass membrane proteins is mediated by the multi-pass translocon (MPT) complex. The SEC61 channel cooperates with the translocating protein TRAM1 to import nascent proteins into the ER. The sequence is that of Protein transport protein Sec61 subunit beta (SEC61B) from Canis lupus familiaris (Dog).